We begin with the raw amino-acid sequence, 384 residues long: D-alanine--D-alanine ligase (384 aa).

The region spanning 167-374 (KKLFAAEGLP…YPTLLATMVD (208 aa)) is the ATP-grasp domain. ATP is bound at residue 195 to 250 (CERLSLPVFVKPARGGSSIGISRVSSWGQLPSAIAYARRHDPKVIVEAAVNGRELE). Residues aspartate 329, glutamate 341, and asparagine 343 each contribute to the Mg(2+) site.

Belongs to the D-alanine--D-alanine ligase family. Mg(2+) is required as a cofactor. Requires Mn(2+) as cofactor.

It is found in the cytoplasm. It catalyses the reaction 2 D-alanine + ATP = D-alanyl-D-alanine + ADP + phosphate + H(+). It participates in cell wall biogenesis; peptidoglycan biosynthesis. Cell wall formation. The protein is D-alanine--D-alanine ligase of Mycobacterium leprae (strain TN).